A 466-amino-acid polypeptide reads, in one-letter code: Hydroxyacid-oxoacid transhydrogenase, mitochondrial (466 aa).

N6-acetyllysine is present on Lys444. The residue at position 451 (Ser451) is a Phosphoserine.

The protein belongs to the iron-containing alcohol dehydrogenase family. Hydroxyacid-oxoacid transhydrogenase subfamily.

Its subcellular location is the mitochondrion. It carries out the reaction (S)-3-hydroxybutanoate + 2-oxoglutarate = (R)-2-hydroxyglutarate + acetoacetate. The enzyme catalyses 4-hydroxybutanoate + 2-oxoglutarate = (R)-2-hydroxyglutarate + succinate semialdehyde. In terms of biological role, catalyzes the cofactor-independent reversible oxidation of gamma-hydroxybutyrate (GHB) to succinic semialdehyde (SSA) coupled to reduction of 2-ketoglutarate (2-KG) to D-2-hydroxyglutarate (D-2-HG). L-3-hydroxybutyrate (L-3-OHB) is also a substrate for HOT when using 2-KG as hydrogen acceptor, resulting in the formation of D-2-HG. This Bos taurus (Bovine) protein is Hydroxyacid-oxoacid transhydrogenase, mitochondrial (ADHFE1).